The primary structure comprises 403 residues: RNA-binding motif, single-stranded-interacting protein 1 (403 aa).

The interval 30–56 (PAHPMAPPSPSTTSSNNNSSSSSNSGW) is disordered. A compositionally biased stretch (low complexity) spans 40–54 (STTSSNNNSSSSSNS). RRM domains follow at residues 62–135 (TNLY…MAKQ) and 141–226 (TNLY…FADG). Threonine 208 is subject to Phosphothreonine.

The protein localises to the nucleus. Functionally, single-stranded DNA binding protein that interacts with the region upstream of the MYC gene. Binds specifically to the DNA sequence motif 5'-[AT]CT[AT][AT]T-3'. Probably has a role in DNA replication. The chain is RNA-binding motif, single-stranded-interacting protein 1 from Rattus norvegicus (Rat).